The chain runs to 239 residues: Small ribosomal subunit protein uS3 (239 aa).

The region spanning 39-107 is the KH type-2 domain; the sequence is IRAALMKTLK…EVLINIVEVR (69 aa). Residues 214-239 form a disordered region; sequence AQDKKMAEQDHGGGGGDRRRRDRDAA.

It belongs to the universal ribosomal protein uS3 family. As to quaternary structure, part of the 30S ribosomal subunit. Forms a tight complex with proteins S10 and S14.

Functionally, binds the lower part of the 30S subunit head. Binds mRNA in the 70S ribosome, positioning it for translation. The protein is Small ribosomal subunit protein uS3 of Methylocella silvestris (strain DSM 15510 / CIP 108128 / LMG 27833 / NCIMB 13906 / BL2).